Consider the following 375-residue polypeptide: Chaperone protein DnaJ (375 aa).

One can recognise a J domain in the interval 5 to 69; the sequence is DYYEVLGVGK…QKRAHYDQFG (65 aa). The segment at 132–214 adopts a CR-type zinc-finger fold; sequence GKETTIEIPR…CGGTGKVKKR (83 aa). The Zn(2+) site is built by Cys145, Cys148, Cys162, Cys165, Cys188, Cys191, Cys202, and Cys205. CXXCXGXG motif repeat units lie at residues 145–152, 162–169, 188–195, and 202–209; these read CETCSGSG, CSHCGGSG, CHYCNGTG, and CSTCGGTG.

Belongs to the DnaJ family. As to quaternary structure, homodimer. It depends on Zn(2+) as a cofactor.

The protein resides in the cytoplasm. Participates actively in the response to hyperosmotic and heat shock by preventing the aggregation of stress-denatured proteins and by disaggregating proteins, also in an autonomous, DnaK-independent fashion. Unfolded proteins bind initially to DnaJ; upon interaction with the DnaJ-bound protein, DnaK hydrolyzes its bound ATP, resulting in the formation of a stable complex. GrpE releases ADP from DnaK; ATP binding to DnaK triggers the release of the substrate protein, thus completing the reaction cycle. Several rounds of ATP-dependent interactions between DnaJ, DnaK and GrpE are required for fully efficient folding. Also involved, together with DnaK and GrpE, in the DNA replication of plasmids through activation of initiation proteins. This chain is Chaperone protein DnaJ, found in Bacillus licheniformis (strain ATCC 14580 / DSM 13 / JCM 2505 / CCUG 7422 / NBRC 12200 / NCIMB 9375 / NCTC 10341 / NRRL NRS-1264 / Gibson 46).